A 595-amino-acid chain; its full sequence is L-fucose isomerase (595 aa).

Residues Glu341 and Asp365 each act as proton acceptor in the active site. Mn(2+) contacts are provided by Glu341, Asp365, and His531.

It belongs to the L-fucose isomerase family. Mn(2+) serves as cofactor.

The protein localises to the cytoplasm. The catalysed reaction is L-fucose = L-fuculose. The protein operates within carbohydrate degradation; L-fucose degradation; L-lactaldehyde and glycerone phosphate from L-fucose: step 1/3. Functionally, converts the aldose L-fucose into the corresponding ketose L-fuculose. The polypeptide is L-fucose isomerase (Clostridium perfringens (strain 13 / Type A)).